The chain runs to 250 residues: Sugar fermentation stimulation protein homolog (250 aa).

The protein belongs to the SfsA family.

This is Sugar fermentation stimulation protein homolog from Synechococcus sp. (strain CC9311).